A 499-amino-acid chain; its full sequence is Glucose-6-phosphate exchanger SLC37A2 (499 aa).

A helical transmembrane segment spans residues 21–40 (YRGFIIVMTFLFYTCYHLSR). 3 N-linked (GlcNAc...) asparagine glycosylation sites follow: Asn-53, Asn-62, and Asn-66. The next 11 membrane-spanning stretches (helical) occupy residues 86–106 (GSLD…SGIF), 116–136 (LSGG…GYYW), 143–163 (YYIL…PAVV), 187–207 (AVGN…AWGL), 208–228 (SFIV…FFLV), 302–322 (LCLL…PLYI), 334–354 (GDLS…AGGI), 362–382 (AITC…YNYF), 391–411 (IAML…ITTA), 434–454 (AIID…AGVL), and 458–478 (GWNY…LLLA).

Belongs to the major facilitator superfamily. Organophosphate:Pi antiporter (OPA) (TC 2.A.1.4) family.

The protein resides in the endoplasmic reticulum membrane. It catalyses the reaction D-glucose 6-phosphate(in) + phosphate(out) = D-glucose 6-phosphate(out) + phosphate(in). Its function is as follows. Inorganic phosphate and glucose-6-phosphate antiporter. May transport cytoplasmic glucose-6-phosphate into the lumen of the endoplasmic reticulum and translocate inorganic phosphate into the opposite direction. This chain is Glucose-6-phosphate exchanger SLC37A2, found in Xenopus laevis (African clawed frog).